The chain runs to 576 residues: G protein-coupled receptor kinase 6 (576 aa).

Positions 1–185 are N-terminal; sequence MELENIVANT…LERQPVTKNT (185 aa). Residues 53–171 form the RGS domain; it reads YHSLCERQPI…LDSIYFNRFL (119 aa). The 263-residue stretch at 186–448 folds into the Protein kinase domain; the sequence is FRQYRVLGKG…AREVKEHPLF (263 aa). ATP-binding positions include 192-200, K215, and 264-270; these read LGKGGFGEV and TLMNGGD. D311 functions as the Proton acceptor in the catalytic mechanism. ATP is bound at residue 315–318; sequence ENIL. The AGC-kinase C-terminal domain maps to 449–514; it reads KKLNFKRLGA…GSVSIPWQNE (66 aa). S484 is modified (phosphoserine; by autocatalysis). T485 carries the post-translational modification Phosphothreonine; by autocatalysis. Residues C561, C562, and C565 are each lipidated (S-palmitoyl cysteine). A phosphoserine mark is found at S566 and S568.

It belongs to the protein kinase superfamily. AGC Ser/Thr protein kinase family. GPRK subfamily. In terms of assembly, interacts with GIT1. In terms of tissue distribution, widely expressed. Detectable in all brain areas examined.

The protein localises to the membrane. It catalyses the reaction [G-protein-coupled receptor] + ATP = [G-protein-coupled receptor]-phosphate + ADP + H(+). Functionally, specifically phosphorylates the activated forms of G protein-coupled receptors. Such receptor phosphorylation initiates beta-arrestin-mediated receptor desensitization, internalization, and signaling events leading to their desensitization. Seems to be involved in the desensitization of D2-like dopamine receptors in striatum and chemokine receptor CXCR4 which is critical for CXCL12-induced cell chemotaxis. Phosphorylates rhodopsin (RHO) (in vitro) and a non G-protein-coupled receptor: LRP6 during Wnt signaling (in vitro). The chain is G protein-coupled receptor kinase 6 (Grk6) from Rattus norvegicus (Rat).